The sequence spans 343 residues: S-adenosylmethionine:tRNA ribosyltransferase-isomerase (343 aa).

Belongs to the QueA family. Monomer.

It localises to the cytoplasm. It carries out the reaction 7-aminomethyl-7-carbaguanosine(34) in tRNA + S-adenosyl-L-methionine = epoxyqueuosine(34) in tRNA + adenine + L-methionine + 2 H(+). The protein operates within tRNA modification; tRNA-queuosine biosynthesis. Its function is as follows. Transfers and isomerizes the ribose moiety from AdoMet to the 7-aminomethyl group of 7-deazaguanine (preQ1-tRNA) to give epoxyqueuosine (oQ-tRNA). The chain is S-adenosylmethionine:tRNA ribosyltransferase-isomerase from Borreliella burgdorferi (strain ATCC 35210 / DSM 4680 / CIP 102532 / B31) (Borrelia burgdorferi).